A 470-amino-acid chain; its full sequence is tRNA(Ile)-lysidine synthase (470 aa).

32-37 (SGGVDS) provides a ligand contact to ATP.

Belongs to the tRNA(Ile)-lysidine synthase family.

It is found in the cytoplasm. It carries out the reaction cytidine(34) in tRNA(Ile2) + L-lysine + ATP = lysidine(34) in tRNA(Ile2) + AMP + diphosphate + H(+). In terms of biological role, ligates lysine onto the cytidine present at position 34 of the AUA codon-specific tRNA(Ile) that contains the anticodon CAU, in an ATP-dependent manner. Cytidine is converted to lysidine, thus changing the amino acid specificity of the tRNA from methionine to isoleucine. The sequence is that of tRNA(Ile)-lysidine synthase from Shewanella woodyi (strain ATCC 51908 / MS32).